The sequence spans 191 residues: MIRISDSAQAHFAKLLANQEEGTQIRVFVINPGTPNAECGVSYCPPDAVEASDTALKFELLTAYVDELSAPYLDDAEIDFVTDQLGSQLTLKAPNAKMRKVSDDAPLMERVEYLLQSQINPQLAGHGGRVTLMEITEDGLAILQFGGGCNGCSMVDVTLKEGIEKQMLNEFPELKGVRDLTEHQRGEHSYY.

Positions 149 and 152 each coordinate [4Fe-4S] cluster.

The protein belongs to the NfuA family. In terms of assembly, homodimer. The cofactor is [4Fe-4S] cluster.

Its function is as follows. Involved in iron-sulfur cluster biogenesis. Binds a 4Fe-4S cluster, can transfer this cluster to apoproteins, and thereby intervenes in the maturation of Fe/S proteins. Could also act as a scaffold/chaperone for damaged Fe/S proteins. The chain is Fe/S biogenesis protein NfuA from Enterobacter sp. (strain 638).